We begin with the raw amino-acid sequence, 396 residues long: Phosphopentomutase (396 aa).

Positions 13, 288, 293, 329, 330, and 341 each coordinate Mn(2+).

Belongs to the phosphopentomutase family. Mn(2+) serves as cofactor.

The protein localises to the cytoplasm. It carries out the reaction 2-deoxy-alpha-D-ribose 1-phosphate = 2-deoxy-D-ribose 5-phosphate. The catalysed reaction is alpha-D-ribose 1-phosphate = D-ribose 5-phosphate. Its pathway is carbohydrate degradation; 2-deoxy-D-ribose 1-phosphate degradation; D-glyceraldehyde 3-phosphate and acetaldehyde from 2-deoxy-alpha-D-ribose 1-phosphate: step 1/2. Its function is as follows. Isomerase that catalyzes the conversion of deoxy-ribose 1-phosphate (dRib-1-P) and ribose 1-phosphate (Rib-1-P) to deoxy-ribose 5-phosphate (dRib-5-P) and ribose 5-phosphate (Rib-5-P), respectively. The protein is Phosphopentomutase of Clostridium perfringens (strain 13 / Type A).